A 527-amino-acid polypeptide reads, in one-letter code: Bifunctional purine biosynthesis protein PurH (527 aa).

The MGS-like domain occupies 9-156; sequence NAKRPIRRAL…KNHPSVAVVV (148 aa).

The protein belongs to the PurH family.

The catalysed reaction is (6R)-10-formyltetrahydrofolate + 5-amino-1-(5-phospho-beta-D-ribosyl)imidazole-4-carboxamide = 5-formamido-1-(5-phospho-D-ribosyl)imidazole-4-carboxamide + (6S)-5,6,7,8-tetrahydrofolate. It catalyses the reaction IMP + H2O = 5-formamido-1-(5-phospho-D-ribosyl)imidazole-4-carboxamide. It participates in purine metabolism; IMP biosynthesis via de novo pathway; 5-formamido-1-(5-phospho-D-ribosyl)imidazole-4-carboxamide from 5-amino-1-(5-phospho-D-ribosyl)imidazole-4-carboxamide (10-formyl THF route): step 1/1. The protein operates within purine metabolism; IMP biosynthesis via de novo pathway; IMP from 5-formamido-1-(5-phospho-D-ribosyl)imidazole-4-carboxamide: step 1/1. This Mycolicibacterium paratuberculosis (strain ATCC BAA-968 / K-10) (Mycobacterium paratuberculosis) protein is Bifunctional purine biosynthesis protein PurH.